A 508-amino-acid chain; its full sequence is NADH-quinone oxidoreductase subunit N 1 (508 aa).

The next 13 membrane-spanning stretches (helical) occupy residues 2–22 (ILGP…GALL), 47–67 (ALGT…VGFV), 87–107 (FTLF…LLAG), 126–146 (FSTV…LFLG), 175–195 (FLLG…IYGA), 220–240 (ALLL…VSAV), 260–280 (FMAV…LLGA), 291–311 (AGWP…ANLI), 321–341 (MLAY…AATV), 351–371 (VMFY…TLIL), 396–416 (ALAF…AGFF), 431–453 (YTLS…RVLV), and 479–499 (LVVS…SLGI).

The protein belongs to the complex I subunit 2 family. As to quaternary structure, NDH-1 is composed of 14 different subunits. Subunits NuoA, H, J, K, L, M, N constitute the membrane sector of the complex.

Its subcellular location is the cell inner membrane. The catalysed reaction is a quinone + NADH + 5 H(+)(in) = a quinol + NAD(+) + 4 H(+)(out). In terms of biological role, NDH-1 shuttles electrons from NADH, via FMN and iron-sulfur (Fe-S) centers, to quinones in the respiratory chain. The immediate electron acceptor for the enzyme in this species is believed to be ubiquinone. Couples the redox reaction to proton translocation (for every two electrons transferred, four hydrogen ions are translocated across the cytoplasmic membrane), and thus conserves the redox energy in a proton gradient. This is NADH-quinone oxidoreductase subunit N 1 from Sorangium cellulosum (strain So ce56) (Polyangium cellulosum (strain So ce56)).